Reading from the N-terminus, the 183-residue chain is Translation initiation factor IF-3 (183 aa).

This sequence belongs to the IF-3 family. Monomer.

It is found in the cytoplasm. Its function is as follows. IF-3 binds to the 30S ribosomal subunit and shifts the equilibrium between 70S ribosomes and their 50S and 30S subunits in favor of the free subunits, thus enhancing the availability of 30S subunits on which protein synthesis initiation begins. In Pseudomonas putida (strain ATCC 700007 / DSM 6899 / JCM 31910 / BCRC 17059 / LMG 24140 / F1), this protein is Translation initiation factor IF-3.